Consider the following 136-residue polypeptide: Small ribosomal subunit protein uS11c (136 aa).

Belongs to the universal ribosomal protein uS11 family. In terms of assembly, part of the 30S ribosomal subunit.

It is found in the plastid. In Epifagus virginiana (Beechdrops), this protein is Small ribosomal subunit protein uS11c.